Here is a 439-residue protein sequence, read N- to C-terminus: Tol-Pal system protein TolB (439 aa).

The first 22 residues, Met1–Ala22, serve as a signal peptide directing secretion.

The protein belongs to the TolB family. The Tol-Pal system is composed of five core proteins: the inner membrane proteins TolA, TolQ and TolR, the periplasmic protein TolB and the outer membrane protein Pal. They form a network linking the inner and outer membranes and the peptidoglycan layer.

The protein resides in the periplasm. Part of the Tol-Pal system, which plays a role in outer membrane invagination during cell division and is important for maintaining outer membrane integrity. The protein is Tol-Pal system protein TolB of Xanthomonas oryzae pv. oryzae (strain MAFF 311018).